The sequence spans 66 residues: uncharacterized protein (66 aa).

Residues 32 to 49 (WAFSLLIAGSAFLWIYMR) traverse the membrane as a helical segment.

The protein resides in the membrane. This is an uncharacterized protein from Bacillus subtilis (strain 168).